Reading from the N-terminus, the 287-residue chain is Putative DNA-3-methyladenine glycosylase YfjP (287 aa).

D242 (proton acceptor) is an active-site residue.

The protein belongs to the alkylbase DNA glycosidase AlkA family.

It carries out the reaction Hydrolysis of alkylated DNA, releasing 3-methyladenine, 3-methylguanine, 7-methylguanine and 7-methyladenine.. Its function is as follows. Hydrolysis of the deoxyribose N-glycosidic bond to excise 3-methyladenine, 3-methylguanine, 7-methylguanine, O2-methylthymine, and O2-methylcytosine from the damaged DNA polymer formed by alkylation lesions. This is Putative DNA-3-methyladenine glycosylase YfjP (yfjP) from Bacillus subtilis (strain 168).